Consider the following 471-residue polypeptide: Heat shock 70 kDa protein 13 (471 aa).

A signal peptide spans 1–22 (MAREMTILGSAVLTLLLAGYLA). Residues 314 to 352 (EEQDRKEPHSSDTELPKDKLSSADDHRVNSGFGRGLSDK) form a disordered region. Positions 315–341 (EQDRKEPHSSDTELPKDKLSSADDHRV) are enriched in basic and acidic residues.

It belongs to the heat shock protein 70 family. In terms of assembly, binds UBQLN2.

It localises to the microsome. It is found in the endoplasmic reticulum. Functionally, has peptide-independent ATPase activity. The protein is Heat shock 70 kDa protein 13 (HSPA13) of Pongo abelii (Sumatran orangutan).